We begin with the raw amino-acid sequence, 170 residues long: uncharacterized protein (170 aa).

One can recognise an N-acetyltransferase domain in the interval 8–167; it reads LLIREFEFKD…DEYYYAILEE (160 aa).

This sequence belongs to the acetyltransferase family.

This is an uncharacterized protein from Bacillus subtilis (strain 168).